The following is an 85-amino-acid chain: CDC42 small effector protein 2 (85 aa).

Residues C10 and C11 are each lipidated (S-palmitoyl cysteine). The CRIB domain maps to 29–42 (IGEPTNFVHTAHVG).

It belongs to the CDC42SE/SPEC family.

It is found in the cytoplasm. It localises to the cytoskeleton. The protein localises to the cell membrane. Probably involved in the organization of the actin cytoskeleton by acting downstream of CDC42, inducing actin filament assembly. This chain is CDC42 small effector protein 2 (cdc42se2), found in Danio rerio (Zebrafish).